Consider the following 213-residue polypeptide: Probable septum site-determining protein MinC (213 aa).

The protein belongs to the MinC family. As to quaternary structure, interacts with MinD and FtsZ.

Its function is as follows. Cell division inhibitor that blocks the formation of polar Z ring septums. Rapidly oscillates between the poles of the cell to destabilize FtsZ filaments that have formed before they mature into polar Z rings. Prevents FtsZ polymerization. This is Probable septum site-determining protein MinC from Clostridium botulinum (strain Eklund 17B / Type B).